The sequence spans 125 residues: Holo-[acyl-carrier-protein] synthase (125 aa).

Mg(2+)-binding residues include aspartate 8 and glutamate 57.

The protein belongs to the P-Pant transferase superfamily. AcpS family. Requires Mg(2+) as cofactor.

The protein resides in the cytoplasm. It catalyses the reaction apo-[ACP] + CoA = holo-[ACP] + adenosine 3',5'-bisphosphate + H(+). Functionally, transfers the 4'-phosphopantetheine moiety from coenzyme A to a Ser of acyl-carrier-protein. In Nitrosomonas eutropha (strain DSM 101675 / C91 / Nm57), this protein is Holo-[acyl-carrier-protein] synthase.